The primary structure comprises 406 residues: Argininosuccinate synthase (406 aa).

Residues 11–19 (AYSGGLDTS) and Ala38 contribute to the ATP site. The L-citrulline site is built by Tyr91 and Ser96. Gly121 provides a ligand contact to ATP. Residues Thr123, Asn127, and Asp128 each coordinate L-aspartate. An L-citrulline-binding site is contributed by Asn127. 5 residues coordinate L-citrulline: Arg131, Ser181, Ser190, Glu266, and Tyr278.

The protein belongs to the argininosuccinate synthase family. Type 1 subfamily. In terms of assembly, homotetramer.

The protein resides in the cytoplasm. It carries out the reaction L-citrulline + L-aspartate + ATP = 2-(N(omega)-L-arginino)succinate + AMP + diphosphate + H(+). Its pathway is amino-acid biosynthesis; L-arginine biosynthesis; L-arginine from L-ornithine and carbamoyl phosphate: step 2/3. This is Argininosuccinate synthase from Campylobacter curvus (strain 525.92).